The primary structure comprises 128 residues: Cytochrome c-type biogenesis protein CcmE (128 aa).

At 1 to 8 the chain is on the cytoplasmic side; the sequence is MQKRVRNR. Residues 9 to 29 traverse the membrane as a helical; Signal-anchor for type II membrane protein segment; it reads LITIIICFCSACLGISIILYN. Residues 30 to 128 lie on the Periplasmic side of the membrane; that stretch reads LEKNIVFFLP…KHDENYRPPQ (99 aa). His120 and Tyr124 together coordinate heme.

It belongs to the CcmE/CycJ family.

It localises to the cell inner membrane. Heme chaperone required for the biogenesis of c-type cytochromes. Transiently binds heme delivered by CcmC and transfers the heme to apo-cytochromes in a process facilitated by CcmF and CcmH. The chain is Cytochrome c-type biogenesis protein CcmE from Rickettsia peacockii (strain Rustic).